The chain runs to 421 residues: BEN domain-containing protein 5 (421 aa).

The residue at position 133 (Lys133) is an N6-acetyllysine. Residues 180 to 243 (RALYEELLRN…LNRRLQDVLL (64 aa)) adopt a coiled-coil conformation. Lys258 is covalently cross-linked (Glycyl lysine isopeptide (Lys-Gly) (interchain with G-Cter in SUMO2)). The 107-residue stretch at 302–408 (GSGIWVDEEK…EKIMDINKSC (107 aa)) folds into the BEN domain.

Acts as a transcriptional repressor. This is BEN domain-containing protein 5 (Bend5) from Mus musculus (Mouse).